Reading from the N-terminus, the 387-residue chain is Anhydro-N-acetylmuramic acid kinase (387 aa).

17–24 (GTSMDGVD) contacts ATP.

Belongs to the anhydro-N-acetylmuramic acid kinase family.

The enzyme catalyses 1,6-anhydro-N-acetyl-beta-muramate + ATP + H2O = N-acetyl-D-muramate 6-phosphate + ADP + H(+). The protein operates within amino-sugar metabolism; 1,6-anhydro-N-acetylmuramate degradation. Its pathway is cell wall biogenesis; peptidoglycan recycling. Functionally, catalyzes the specific phosphorylation of 1,6-anhydro-N-acetylmuramic acid (anhMurNAc) with the simultaneous cleavage of the 1,6-anhydro ring, generating MurNAc-6-P. Is required for the utilization of anhMurNAc either imported from the medium or derived from its own cell wall murein, and thus plays a role in cell wall recycling. The polypeptide is Anhydro-N-acetylmuramic acid kinase (Burkholderia pseudomallei (strain K96243)).